A 261-amino-acid chain; its full sequence is Cytochrome c oxidase subunit 3 (261 aa).

The Mitochondrial matrix segment spans residues Met-1–Pro-15. Residues Trp-16–Trp-34 traverse the membrane as a helical segment. The Mitochondrial intermembrane segment spans residues Phe-35–Cys-40. Residues Ile-41 to Thr-66 traverse the membrane as a helical segment. At Phe-67 to Thr-72 the chain is on the mitochondrial matrix side. A helical membrane pass occupies residues Ser-73–Ser-105. Residues Leu-106 to Glu-128 are Mitochondrial intermembrane-facing. Residues Val-129–Thr-152 traverse the membrane as a helical segment. The Mitochondrial matrix portion of the chain corresponds to Glu-153 to Asn-155. Residues Arg-156–Glu-183 traverse the membrane as a helical segment. Residues Thr-184 to Asp-190 are Mitochondrial intermembrane-facing. Residues Gly-191–Leu-223 form a helical membrane-spanning segment. Over Gln-224 to His-232 the chain is Mitochondrial matrix. Residues Phe-233–Ile-256 traverse the membrane as a helical segment. The Mitochondrial intermembrane segment spans residues Tyr-257 to Ser-261.

The protein belongs to the cytochrome c oxidase subunit 3 family. As to quaternary structure, component of the cytochrome c oxidase (complex IV, CIV), a multisubunit enzyme composed of 14 subunits. The complex is composed of a catalytic core of 3 subunits MT-CO1, MT-CO2 and MT-CO3, encoded in the mitochondrial DNA, and 11 supernumerary subunits COX4I, COX5A, COX5B, COX6A, COX6B, COX6C, COX7A, COX7B, COX7C, COX8 and NDUFA4, which are encoded in the nuclear genome. The complex exists as a monomer or a dimer and forms supercomplexes (SCs) in the inner mitochondrial membrane with NADH-ubiquinone oxidoreductase (complex I, CI) and ubiquinol-cytochrome c oxidoreductase (cytochrome b-c1 complex, complex III, CIII), resulting in different assemblies (supercomplex SCI(1)III(2)IV(1) and megacomplex MCI(2)III(2)IV(2)).

It localises to the mitochondrion inner membrane. The enzyme catalyses 4 Fe(II)-[cytochrome c] + O2 + 8 H(+)(in) = 4 Fe(III)-[cytochrome c] + 2 H2O + 4 H(+)(out). Functionally, component of the cytochrome c oxidase, the last enzyme in the mitochondrial electron transport chain which drives oxidative phosphorylation. The respiratory chain contains 3 multisubunit complexes succinate dehydrogenase (complex II, CII), ubiquinol-cytochrome c oxidoreductase (cytochrome b-c1 complex, complex III, CIII) and cytochrome c oxidase (complex IV, CIV), that cooperate to transfer electrons derived from NADH and succinate to molecular oxygen, creating an electrochemical gradient over the inner membrane that drives transmembrane transport and the ATP synthase. Cytochrome c oxidase is the component of the respiratory chain that catalyzes the reduction of oxygen to water. Electrons originating from reduced cytochrome c in the intermembrane space (IMS) are transferred via the dinuclear copper A center (CU(A)) of subunit 2 and heme A of subunit 1 to the active site in subunit 1, a binuclear center (BNC) formed by heme A3 and copper B (CU(B)). The BNC reduces molecular oxygen to 2 water molecules using 4 electrons from cytochrome c in the IMS and 4 protons from the mitochondrial matrix. The polypeptide is Cytochrome c oxidase subunit 3 (MT-CO3) (Petromyzon marinus (Sea lamprey)).